The sequence spans 112 residues: 2Fe-2S ferredoxin (112 aa).

Residues 5–107 form the 2Fe-2S ferredoxin-type domain; that stretch reads IKVTFIINDG…GIKVHLPAAT (103 aa). Cys42, Cys48, Cys51, and Cys88 together coordinate [2Fe-2S] cluster.

The protein belongs to the adrenodoxin/putidaredoxin family. [2Fe-2S] cluster is required as a cofactor.

Its function is as follows. Ferredoxin are iron-sulfur proteins that transfer electrons in a wide variety of metabolic reactions. This chain is 2Fe-2S ferredoxin (fdxB), found in Rickettsia rickettsii.